Here is a 113-residue protein sequence, read N- to C-terminus: Small ribosomal subunit protein bS6 (113 aa).

It belongs to the bacterial ribosomal protein bS6 family.

In terms of biological role, binds together with bS18 to 16S ribosomal RNA. In Flavobacterium psychrophilum (strain ATCC 49511 / DSM 21280 / CIP 103535 / JIP02/86), this protein is Small ribosomal subunit protein bS6.